The following is a 355-amino-acid chain: MQIILPDILQTWAYARLLNPHYDGAKLESSLWIHPLVAKLFDQKGQKAFQNDYTSLLASLMYSHQGKVPSRRCDMMNLFFVYDEYTDVVSPEIAHRLSKIVVDAMKNSDEMSPCGEHPIGDKAKEFWRLATTLLPATGSNSDVCKSRFINLTEEYLNAVTVEARDRNEGTIHSVKEYLTMRRATSGAGLMLALIEFELDLPKAVLEHKFVQALEEIYTRTRVSSGQANHNLITVVMHENPGLSLQGAFDWLGSYAAGVVECFQTNVRNLPSFCDVEGPACESVDGTLQERVDKYISGLGQAVRAEDDWAFETTRYYGEDGPKVRETRVLVIRPVKRITRRHLLQSLEIKYSMVRG.

Belongs to the terpene synthase family.

The protein is Sesquiterpene synthase-like protein Agr11 of Cyclocybe aegerita (Black poplar mushroom).